Consider the following 632-residue polypeptide: 2-oxoacid:ferredoxin oxidoreductase subunit alpha (632 aa).

A YPITP motif motif is present at residues 253 to 257 (YPITP). Residues Thr256 and Arg344 each contribute to the substrate site.

Heterodimer composed of an alpha and a beta subunit.

It is found in the cytoplasm. The catalysed reaction is a 2-oxocarboxylate + 2 oxidized [2Fe-2S]-[ferredoxin] + CoA = an acyl-CoA + 2 reduced [2Fe-2S]-[ferredoxin] + CO2 + H(+). Catalyzes the coenzyme A-dependent oxidative decarboxylation of different 2-oxoacids such as 2-oxoglutarate, pyruvate and 2-oxobutyrate to form their CoA derivatives. The chain is 2-oxoacid:ferredoxin oxidoreductase subunit alpha from Sulfolobus sp.